Here is a 235-residue protein sequence, read N- to C-terminus: Phosphoribosylaminoimidazole-succinocarboxamide synthase (235 aa).

It belongs to the SAICAR synthetase family.

The enzyme catalyses 5-amino-1-(5-phospho-D-ribosyl)imidazole-4-carboxylate + L-aspartate + ATP = (2S)-2-[5-amino-1-(5-phospho-beta-D-ribosyl)imidazole-4-carboxamido]succinate + ADP + phosphate + 2 H(+). Its pathway is purine metabolism; IMP biosynthesis via de novo pathway; 5-amino-1-(5-phospho-D-ribosyl)imidazole-4-carboxamide from 5-amino-1-(5-phospho-D-ribosyl)imidazole-4-carboxylate: step 1/2. The protein is Phosphoribosylaminoimidazole-succinocarboxamide synthase of Chlorobaculum parvum (strain DSM 263 / NCIMB 8327) (Chlorobium vibrioforme subsp. thiosulfatophilum).